Reading from the N-terminus, the 190-residue chain is Elongation factor P (190 aa).

Lys-34 carries the post-translational modification N6-(3,6-diaminohexanoyl)-5-hydroxylysine.

It belongs to the elongation factor P family. Post-translationally, may be beta-lysylated on the epsilon-amino group of Lys-34 by the combined action of EpmA and EpmB, and then hydroxylated on the C5 position of the same residue by EpmC (if this protein is present). Lysylation is critical for the stimulatory effect of EF-P on peptide-bond formation. The lysylation moiety may extend toward the peptidyltransferase center and stabilize the terminal 3-CCA end of the tRNA. Hydroxylation of the C5 position on Lys-34 may allow additional potential stabilizing hydrogen-bond interactions with the P-tRNA.

The protein resides in the cytoplasm. It participates in protein biosynthesis; polypeptide chain elongation. Its function is as follows. Involved in peptide bond synthesis. Alleviates ribosome stalling that occurs when 3 or more consecutive Pro residues or the sequence PPG is present in a protein, possibly by augmenting the peptidyl transferase activity of the ribosome. Modification of Lys-34 is required for alleviation. In Psychrobacter arcticus (strain DSM 17307 / VKM B-2377 / 273-4), this protein is Elongation factor P.